The sequence spans 212 residues: Prolactin (212 aa).

An N-terminal signal peptide occupies residues 1-24; that stretch reads MAQRKTNGSKLFMMVLYMVAACSA. 2 disulfide bridges follow: Cys70-Cys185 and Cys202-Cys212.

It belongs to the somatotropin/prolactin family. Pituitary gland.

Its subcellular location is the secreted. This chain is Prolactin (prl), found in Dicentrarchus labrax (European seabass).